The following is a 226-amino-acid chain: Ribonuclease 3 (226 aa).

Positions 6–128 (INRLQRKLGY…LIGGIFLDSD (123 aa)) constitute an RNase III domain. E41 is a binding site for Mg(2+). Residue D45 is part of the active site. The Mg(2+) site is built by D114 and E117. E117 is an active-site residue. Positions 155–225 (DPKTRLQEFL…AEQALKKLEL (71 aa)) constitute a DRBM domain.

This sequence belongs to the ribonuclease III family. As to quaternary structure, homodimer. The cofactor is Mg(2+).

It localises to the cytoplasm. It catalyses the reaction Endonucleolytic cleavage to 5'-phosphomonoester.. Functionally, digests double-stranded RNA. Involved in the processing of primary rRNA transcript to yield the immediate precursors to the large and small rRNAs (23S and 16S). Processes some mRNAs, and tRNAs when they are encoded in the rRNA operon. Processes pre-crRNA and tracrRNA of type II CRISPR loci if present in the organism. The sequence is that of Ribonuclease 3 from Pectobacterium carotovorum subsp. carotovorum (strain PC1).